Reading from the N-terminus, the 63-residue chain is DNA-directed RNA polymerase 7 kDa subunit (63 aa).

This sequence belongs to the poxviridae DNA-directed RNA polymerase 7 kDa subunit family. As to quaternary structure, the DNA-dependent RNA polymerase used for intermediate and late genes expression consists of eight subunits 147 kDa, 133 kDa, 35 kDa, 30 kDa, 22 kDa, 19 kDa, 18 kDa and 7 kDa totalling more than 500 kDa in mass. The same holoenzyme, with the addition of the transcription-specificity factor RAP94, is used for early gene expression.

It is found in the virion. The catalysed reaction is RNA(n) + a ribonucleoside 5'-triphosphate = RNA(n+1) + diphosphate. In terms of biological role, part of the DNA-dependent RNA polymerase which catalyzes the transcription of viral DNA into RNA using the four ribonucleoside triphosphates as substrates. Responsible for the transcription of early, intermediate and late genes. DNA-dependent RNA polymerase associates with the early transcription factor (ETF) thereby allowing the early genes transcription. Late transcription, and probably also intermediate transcription, require newly synthesized RNA polymerase. The protein is DNA-directed RNA polymerase 7 kDa subunit (RPO7) of Homo sapiens (Human).